The primary structure comprises 602 residues: NADH-quinone oxidoreductase subunit C/D (602 aa).

The segment at 1–192 is NADH dehydrogenase I subunit C; sequence MVNNMTDLTA…DPFELTKAKQ (192 aa). Positions 216–602 are NADH dehydrogenase I subunit D; that stretch reads DFMFLNLGPN…IDFVMSDVDR (387 aa).

The protein in the N-terminal section; belongs to the complex I 30 kDa subunit family. This sequence in the C-terminal section; belongs to the complex I 49 kDa subunit family. NDH-1 is composed of 13 different subunits. Subunits NuoB, CD, E, F, and G constitute the peripheral sector of the complex.

Its subcellular location is the cell inner membrane. The enzyme catalyses a quinone + NADH + 5 H(+)(in) = a quinol + NAD(+) + 4 H(+)(out). Functionally, NDH-1 shuttles electrons from NADH, via FMN and iron-sulfur (Fe-S) centers, to quinones in the respiratory chain. The immediate electron acceptor for the enzyme in this species is believed to be ubiquinone. Couples the redox reaction to proton translocation (for every two electrons transferred, four hydrogen ions are translocated across the cytoplasmic membrane), and thus conserves the redox energy in a proton gradient. This Klebsiella pneumoniae subsp. pneumoniae (strain ATCC 700721 / MGH 78578) protein is NADH-quinone oxidoreductase subunit C/D.